The primary structure comprises 428 residues: Enolase (428 aa).

Gln-162 contributes to the (2R)-2-phosphoglycerate binding site. The Proton donor role is filled by Glu-204. Mg(2+) is bound by residues Asp-241, Glu-283, and Asp-310. The (2R)-2-phosphoglycerate site is built by Lys-335, Arg-364, Ser-365, and Lys-386. Lys-335 functions as the Proton acceptor in the catalytic mechanism.

The protein belongs to the enolase family. Mg(2+) serves as cofactor.

Its subcellular location is the cytoplasm. It is found in the secreted. The protein resides in the cell surface. It carries out the reaction (2R)-2-phosphoglycerate = phosphoenolpyruvate + H2O. The protein operates within carbohydrate degradation; glycolysis; pyruvate from D-glyceraldehyde 3-phosphate: step 4/5. Functionally, catalyzes the reversible conversion of 2-phosphoglycerate (2-PG) into phosphoenolpyruvate (PEP). It is essential for the degradation of carbohydrates via glycolysis. In Rhodococcus erythropolis (strain PR4 / NBRC 100887), this protein is Enolase.